Here is a 462-residue protein sequence, read N- to C-terminus: tRNA modification GTPase MnmE (462 aa).

(6S)-5-formyl-5,6,7,8-tetrahydrofolate is bound by residues Arg27, Glu89, and Arg128. Positions 223 to 383 (GLKIAIVGRP…LEAAILAAVG (161 aa)) constitute a TrmE-type G domain. Residues 233 to 238 (NVGKSS), 252 to 258 (TDLPGRT), and 277 to 280 (DTAG) each bind GTP. Ser237 and Thr258 together coordinate Mg(2+). Residue Lys462 coordinates (6S)-5-formyl-5,6,7,8-tetrahydrofolate.

The protein belongs to the TRAFAC class TrmE-Era-EngA-EngB-Septin-like GTPase superfamily. TrmE GTPase family. In terms of assembly, homodimer. Heterotetramer of two MnmE and two MnmG subunits. The cofactor is K(+).

The protein resides in the cytoplasm. Its function is as follows. Exhibits a very high intrinsic GTPase hydrolysis rate. Involved in the addition of a carboxymethylaminomethyl (cmnm) group at the wobble position (U34) of certain tRNAs, forming tRNA-cmnm(5)s(2)U34. This is tRNA modification GTPase MnmE from Synechococcus sp. (strain ATCC 27144 / PCC 6301 / SAUG 1402/1) (Anacystis nidulans).